Reading from the N-terminus, the 1024-residue chain is Beta-galactosidase 2 (1024 aa).

Substrate-binding residues include asparagine 103 and aspartate 202. A Na(+)-binding site is contributed by aspartate 202. Glutamate 417, histidine 419, and glutamate 462 together coordinate Mg(2+). Substrate-binding positions include glutamate 462 and 538–541 (EYAH). The active-site Proton donor is glutamate 462. The Nucleophile role is filled by glutamate 538. A Mg(2+)-binding site is contributed by asparagine 598. Positions 602 and 605 each coordinate Na(+). The substrate site is built by asparagine 605 and tryptophan 1000.

This sequence belongs to the glycosyl hydrolase 2 family. Homotetramer. Requires Mg(2+) as cofactor. The cofactor is Na(+).

The enzyme catalyses Hydrolysis of terminal non-reducing beta-D-galactose residues in beta-D-galactosides.. The polypeptide is Beta-galactosidase 2 (Klebsiella pneumoniae subsp. pneumoniae (strain ATCC 700721 / MGH 78578)).